The following is a 323-amino-acid chain: Large ribosomal subunit protein uL10x (323 aa).

The disordered stretch occupies residues 287–323; sequence DAGGGSAQAGAAAKVEEKKEESDEEDYEGGFGLFDEE. Residue serine 308 is modified to Phosphoserine. The span at 308 to 323 shows a compositional bias: acidic residues; the sequence is SDEEDYEGGFGLFDEE. Phosphotyrosine is present on tyrosine 313.

The protein belongs to the universal ribosomal protein uL10 family. P0 forms a pentameric complex by interaction with dimers of P1 and P2.

Its function is as follows. Ribosomal protein P0 is the functional equivalent of E.coli protein L10. The protein is Large ribosomal subunit protein uL10x (RPP0C) of Arabidopsis thaliana (Mouse-ear cress).